A 244-amino-acid chain; its full sequence is High affinity immunoglobulin epsilon receptor subunit beta (244 aa).

Over 1-59 the chain is Cytoplasmic; the sequence is MDTESNRRANLALPQEPSSVPAFEVLEISPQEVSSGRLLKSASSPPLHTWLTVLKKEQE. A helical membrane pass occupies residues 60 to 79; that stretch reads FLGVTQILTAMICLCFGTVV. Over 80–97 the chain is Extracellular; that stretch reads CSVLDISHIEGDIFSSFK. A helical transmembrane segment spans residues 98–117; the sequence is AGYPFWGAIFFSISGMLSII. Over 118 to 130 the chain is Cytoplasmic; the sequence is SERRNATYLVRGS. Residues 131 to 150 traverse the membrane as a helical segment; it reads LGANTASSIAGGTGITILII. The Extracellular portion of the chain corresponds to 151–180; it reads NLKKSLAYIHIHSCQKFFETKCFMASFSTE. Residues 181 to 200 traverse the membrane as a helical segment; sequence IVVMMLFLTILGLGSAVSLT. The Cytoplasmic segment spans residues 201–244; that stretch reads ICGAGEELKGNKVPEDRVYEELNIYSATYSELEDPGEMSPPIDL. Phosphotyrosine occurs at positions 219 and 225. Residue S226 is modified to Phosphoserine. A Phosphotyrosine modification is found at Y229.

It belongs to the MS4A family. Tetramer of an alpha chain, a beta chain, and two disulfide linked gamma chains. Binds LILRB1. Interacts with FGR, FES/FPS and LYN. Post-translationally, phosphorylated on tyrosine residues by LYN. In terms of tissue distribution, found on the surface of mast cells and basophils.

The protein resides in the membrane. Its function is as follows. High affinity receptor that binds to the Fc region of immunoglobulins epsilon. Aggregation of FCER1 by multivalent antigens is required for the full mast cell response, including the release of preformed mediators (such as histamine) by degranulation and de novo production of lipid mediators and cytokines. Also mediates the secretion of important lymphokines. Binding of allergen to receptor-bound IgE leads to cell activation and the release of mediators responsible for the manifestations of allergy. This chain is High affinity immunoglobulin epsilon receptor subunit beta (MS4A2), found in Homo sapiens (Human).